We begin with the raw amino-acid sequence, 898 residues long: Putative aconitate hydratase, cytoplasmic (898 aa).

Residues Gln90 and 209 to 211 (DSH) each bind substrate. 3 residues coordinate [4Fe-4S] cluster: Cys441, Cys507, and Cys510. Substrate contacts are provided by residues Arg540, Arg545, Arg703, and 784–785 (SR).

This sequence belongs to the aconitase/IPM isomerase family. [4Fe-4S] cluster is required as a cofactor.

The protein resides in the cytoplasm. The enzyme catalyses citrate = D-threo-isocitrate. It participates in carbohydrate metabolism; glyoxylate and dicarboxylate metabolism. Its function is as follows. Catalyzes the isomerization of citrate to isocitrate via cis-aconitate. The polypeptide is Putative aconitate hydratase, cytoplasmic (Oryza sativa subsp. japonica (Rice)).